Consider the following 505-residue polypeptide: Putative heat shock protein HSP 90-beta 4 (505 aa).

ATP contacts are provided by asparagine 22, lysine 83, and phenylalanine 109. A disordered region spans residues 197–248 (EKEISDDEEEKGEKEEEDKDDKEKPKTEDVGSDEEDDTDKNNKKKTKKIKEK). The span at 200–216 (ISDDEEEKGEKEEEDKD) shows a compositional bias: acidic residues.

Belongs to the heat shock protein 90 family. As to quaternary structure, homodimer.

Its subcellular location is the cytoplasm. Its function is as follows. Putative molecular chaperone that may promote the maturation, structural maintenance and proper regulation of specific target proteins. This chain is Putative heat shock protein HSP 90-beta 4 (HSP90AB4P), found in Homo sapiens (Human).